Here is a 445-residue protein sequence, read N- to C-terminus: Tubulin beta chain (445 aa).

GTP is bound by residues Gln11, Glu69, Ser138, Gly142, Thr143, Gly144, Asn205, and Asn227. Glu69 serves as a coordination point for Mg(2+).

The protein belongs to the tubulin family. Dimer of alpha and beta chains. A typical microtubule is a hollow water-filled tube with an outer diameter of 25 nm and an inner diameter of 15 nM. Alpha-beta heterodimers associate head-to-tail to form protofilaments running lengthwise along the microtubule wall with the beta-tubulin subunit facing the microtubule plus end conferring a structural polarity. Microtubules usually have 13 protofilaments but different protofilament numbers can be found in some organisms and specialized cells. Mg(2+) is required as a cofactor.

It localises to the cytoplasm. The protein localises to the cytoskeleton. Its function is as follows. Tubulin is the major constituent of microtubules, a cylinder consisting of laterally associated linear protofilaments composed of alpha- and beta-tubulin heterodimers. Microtubules grow by the addition of GTP-tubulin dimers to the microtubule end, where a stabilizing cap forms. Below the cap, tubulin dimers are in GDP-bound state, owing to GTPase activity of alpha-tubulin. In Ajellomyces capsulatus (Darling's disease fungus), this protein is Tubulin beta chain (TUB2).